The chain runs to 648 residues: Mitochondrial Rho GTPase 3 (648 aa).

The Cytoplasmic portion of the chain corresponds to 1-621; the sequence is MWMGVGDSSG…KRSCKLNNRS (621 aa). S11 carries the post-translational modification Phosphoserine. The Miro 1 domain occupies 12 to 179; that stretch reads PKPIRIVVVG…LYYAQKAVID (168 aa). 2 EF-hand domains span residues 195 to 230 and 316 to 351; these read RCIA…CFDT and VAIE…APES. Ca(2+) contacts are provided by D208, N210, D212, E219, D329, N331, D333, N335, and E340. One can recognise a Miro 2 domain in the interval 425 to 599; that stretch reads RKVVQCFVFG…FRKILTAAEN (175 aa). The helical transmembrane segment at 622-644 threads the bilayer; the sequence is LMAVSIGTAVLIAGLASFRLYTA. Topologically, residues 645-648 are mitochondrial intermembrane; it reads RKQS.

The protein belongs to the mitochondrial Rho GTPase family. Expressed at very low levels in roots, leaves, stems, flowers and siliques.

Its subcellular location is the mitochondrion outer membrane. Its function is as follows. Mitochondrial GTPase that may be involved in mitochondrion development. This Arabidopsis thaliana (Mouse-ear cress) protein is Mitochondrial Rho GTPase 3.